The sequence spans 283 residues: Bifunctional protein FolD (283 aa).

Residues 164-166 (GRS), S189, and T230 each bind NADP(+).

It belongs to the tetrahydrofolate dehydrogenase/cyclohydrolase family. Homodimer.

It carries out the reaction (6R)-5,10-methylene-5,6,7,8-tetrahydrofolate + NADP(+) = (6R)-5,10-methenyltetrahydrofolate + NADPH. It catalyses the reaction (6R)-5,10-methenyltetrahydrofolate + H2O = (6R)-10-formyltetrahydrofolate + H(+). Its pathway is one-carbon metabolism; tetrahydrofolate interconversion. Its function is as follows. Catalyzes the oxidation of 5,10-methylenetetrahydrofolate to 5,10-methenyltetrahydrofolate and then the hydrolysis of 5,10-methenyltetrahydrofolate to 10-formyltetrahydrofolate. The sequence is that of Bifunctional protein FolD from Dictyoglomus thermophilum (strain ATCC 35947 / DSM 3960 / H-6-12).